A 361-amino-acid polypeptide reads, in one-letter code: D-alanine--D-alanine ligase (361 aa).

Residues 134-344 (KLLLKSFNIP…FKDLIDNLID (211 aa)) enclose the ATP-grasp domain. 167–222 (KEVLGYPVIVKPAVLGSSIGINVAYSENQIESCIEEALKYDLTIVIEKFIEAREIE) lines the ATP pocket. D297, E311, and N313 together coordinate Mg(2+).

This sequence belongs to the D-alanine--D-alanine ligase family. It depends on Mg(2+) as a cofactor. Mn(2+) is required as a cofactor.

The protein localises to the cytoplasm. It carries out the reaction 2 D-alanine + ATP = D-alanyl-D-alanine + ADP + phosphate + H(+). It functions in the pathway cell wall biogenesis; peptidoglycan biosynthesis. Cell wall formation. This is D-alanine--D-alanine ligase from Borreliella afzelii (strain PKo) (Borrelia afzelii).